Reading from the N-terminus, the 333-residue chain is Transcription initiation factor IIB (333 aa).

A TFIIB-type zinc finger spans residues 33-64 (EIYRCPICGNDRFVYNYERGEVVCIVCGAVVQ). Positions 37, 40, 56, and 59 each coordinate Zn(2+). Repeat copies occupy residues 149-232 (QELE…LREL) and 243-324 (LYIS…ELAK).

It belongs to the TFIIB family.

Its function is as follows. Stabilizes TBP binding to an archaeal box-A promoter. Also responsible for recruiting RNA polymerase II to the pre-initiation complex (DNA-TBP-TFIIB). The protein is Transcription initiation factor IIB of Pyrobaculum arsenaticum (strain DSM 13514 / JCM 11321 / PZ6).